The sequence spans 446 residues: N-succinylarginine dihydrolase (446 aa).

Residues 19 to 28 (AGLSFGNVAS), N110, and 137 to 138 (HR) contribute to the substrate site. The active site involves E174. A substrate-binding site is contributed by R213. H249 is a catalytic residue. D251 and N364 together coordinate substrate. C370 (nucleophile) is an active-site residue.

The protein belongs to the succinylarginine dihydrolase family. In terms of assembly, homodimer.

The catalysed reaction is N(2)-succinyl-L-arginine + 2 H2O + 2 H(+) = N(2)-succinyl-L-ornithine + 2 NH4(+) + CO2. Its pathway is amino-acid degradation; L-arginine degradation via AST pathway; L-glutamate and succinate from L-arginine: step 2/5. Its function is as follows. Catalyzes the hydrolysis of N(2)-succinylarginine into N(2)-succinylornithine, ammonia and CO(2). The protein is N-succinylarginine dihydrolase of Burkholderia lata (strain ATCC 17760 / DSM 23089 / LMG 22485 / NCIMB 9086 / R18194 / 383).